A 452-amino-acid polypeptide reads, in one-letter code: NADH-quinone oxidoreductase subunit H (452 aa).

9 consecutive transmembrane segments (helical) span residues Ile-28–Ile-48, Val-96–Ile-116, Leu-136–Leu-156, Val-177–Thr-197, Ile-210–Glu-230, Ala-264–Ala-286, Trp-301–Val-321, Lys-335–Ile-355, and Tyr-366–Trp-386.

The protein belongs to the complex I subunit 1 family. As to quaternary structure, NDH-1 is composed of 14 different subunits. Subunits NuoA, H, J, K, L, M, N constitute the membrane sector of the complex.

It localises to the cell membrane. The catalysed reaction is a quinone + NADH + 5 H(+)(in) = a quinol + NAD(+) + 4 H(+)(out). Functionally, NDH-1 shuttles electrons from NADH, via FMN and iron-sulfur (Fe-S) centers, to quinones in the respiratory chain. The immediate electron acceptor for the enzyme in this species is believed to be ubiquinone. Couples the redox reaction to proton translocation (for every two electrons transferred, four hydrogen ions are translocated across the cytoplasmic membrane), and thus conserves the redox energy in a proton gradient. This subunit may bind ubiquinone. The sequence is that of NADH-quinone oxidoreductase subunit H from Thermobifida fusca (strain YX).